The sequence spans 303 residues: Probable porphobilinogen deaminase (303 aa).

Position 233 is an S-(dipyrrolylmethanemethyl)cysteine (Cys-233).

The protein belongs to the HMBS family. It depends on dipyrromethane as a cofactor.

It carries out the reaction 4 porphobilinogen + H2O = hydroxymethylbilane + 4 NH4(+). The protein operates within porphyrin-containing compound metabolism; protoporphyrin-IX biosynthesis; coproporphyrinogen-III from 5-aminolevulinate: step 2/4. Its function is as follows. Tetrapolymerization of the monopyrrole PBG into the hydroxymethylbilane pre-uroporphyrinogen in several discrete steps. The protein is Probable porphobilinogen deaminase of Methanocella arvoryzae (strain DSM 22066 / NBRC 105507 / MRE50).